The following is a 427-amino-acid chain: Adenylosuccinate synthetase (427 aa).

Residues Gly-12–Lys-18 and Gly-40–Thr-42 contribute to the GTP site. The active-site Proton acceptor is the Asp-13. Asp-13 and Gly-40 together coordinate Mg(2+). Residues Asp-13–Lys-16, Asn-38–His-41, Thr-128, Arg-142, Gln-223, Thr-238, and Arg-302 each bind IMP. His-41 serves as the catalytic Proton donor. Position 298-304 (Val-298–Arg-304) interacts with substrate. Residues Arg-304, Lys-330 to Asp-332, and Gly-412 to Gly-414 contribute to the GTP site.

It belongs to the adenylosuccinate synthetase family. As to quaternary structure, homodimer. Mg(2+) serves as cofactor.

Its subcellular location is the cytoplasm. The enzyme catalyses IMP + L-aspartate + GTP = N(6)-(1,2-dicarboxyethyl)-AMP + GDP + phosphate + 2 H(+). It participates in purine metabolism; AMP biosynthesis via de novo pathway; AMP from IMP: step 1/2. Functionally, plays an important role in the de novo pathway of purine nucleotide biosynthesis. Catalyzes the first committed step in the biosynthesis of AMP from IMP. This Frankia casuarinae (strain DSM 45818 / CECT 9043 / HFP020203 / CcI3) protein is Adenylosuccinate synthetase.